Here is a 103-residue protein sequence, read N- to C-terminus: Cell division protein FtsB (103 aa).

Residues 1–3 (MGK) lie on the Cytoplasmic side of the membrane. The helical transmembrane segment at 4–21 (LTLLLLALLVWLQYSLWF) threads the bilayer. The Periplasmic segment spans residues 22 to 103 (GKNGIHDYSR…RAGGPAQNNR (82 aa)). A coiled-coil region spans residues 38–62 (VQQATNAKLKARNDQLFAEIDDLNG).

The protein belongs to the FtsB family. As to quaternary structure, part of a complex composed of FtsB, FtsL and FtsQ.

The protein localises to the cell inner membrane. Its function is as follows. Essential cell division protein. May link together the upstream cell division proteins, which are predominantly cytoplasmic, with the downstream cell division proteins, which are predominantly periplasmic. The chain is Cell division protein FtsB from Cronobacter sakazakii (strain ATCC BAA-894) (Enterobacter sakazakii).